A 145-amino-acid polypeptide reads, in one-letter code: Fatty acid-binding protein homolog 4 (145 aa).

Belongs to the calycin superfamily. Fatty-acid binding protein (FABP) family.

The chain is Fatty acid-binding protein homolog 4 (lbp-4) from Caenorhabditis elegans.